Consider the following 109-residue polypeptide: UPF0122 protein CLH_1195 (109 aa).

It belongs to the UPF0122 family.

In terms of biological role, might take part in the signal recognition particle (SRP) pathway. This is inferred from the conservation of its genetic proximity to ftsY/ffh. May be a regulatory protein. This chain is UPF0122 protein CLH_1195, found in Clostridium botulinum (strain Alaska E43 / Type E3).